The sequence spans 1280 residues: Multidrug resistance protein 1 (1280 aa).

Topologically, residues 1–72 (MSRAHAAYAN…YADATDRVLM (72 aa)) are cytoplasmic. Positions 72–357 (MIAGTAFAVA…VAPSRTAFTE (286 aa)) constitute an ABC transmembrane type-1 1 domain. Transmembrane regions (helical) follow at residues 73–93 (IAGT…SFIF), 120–140 (YVGI…TVAA), 189–209 (KLSQ…AGFV), 216–236 (LMMI…GSIV), 297–317 (LSAA…FFFG), and 326–345 (RDMA…SFGL). The Cytoplasmic portion of the chain corresponds to 346-712 (GFVAPSRTAF…MRMNKDKAWA (367 aa)). Positions 391-634 (IEFRNVRFAY…DGEFAAVAKM (244 aa)) constitute an ABC transporter 1 domain. 426-433 (GASGCGKS) contacts ATP. 6 helical membrane passes run 713–733 (VALG…SSIV), 762–781 (PLFI…HGFY), 837–857 (IGLK…GFIY), 858–878 (QWKL…CSLT), 938–958 (IIAG…YALC), and 976–996 (VMIA…AGAF). Residues 713-1002 (VALGILSSVV…AGAFATKLAD (290 aa)) enclose the ABC transmembrane type-1 2 domain. Residues 1036 to 1274 (IEYRNVQFIY…GGEYKTRYDL (239 aa)) enclose the ABC transporter 2 domain. 1071–1078 (GQTGCGKS) is a binding site for ATP. N-linked (GlcNAc...) asparagine glycosylation is present at N1113.

This sequence belongs to the ABC transporter superfamily. ABCB family. Multidrug resistance exporter (TC 3.A.1.201) subfamily.

The protein localises to the membrane. The catalysed reaction is ATP + H2O + xenobioticSide 1 = ADP + phosphate + xenobioticSide 2.. Functionally, energy-dependent efflux pump responsible for decreased drug accumulation in multi-drug-resistant cells. Confers vinblastine resistance. The polypeptide is Multidrug resistance protein 1 (MDR1) (Leishmania enriettii).